The primary structure comprises 294 residues: Indole-3-glycerol phosphate synthase (294 aa).

It belongs to the TrpC family.

The enzyme catalyses 1-(2-carboxyphenylamino)-1-deoxy-D-ribulose 5-phosphate + H(+) = (1S,2R)-1-C-(indol-3-yl)glycerol 3-phosphate + CO2 + H2O. It participates in amino-acid biosynthesis; L-tryptophan biosynthesis; L-tryptophan from chorismate: step 4/5. This chain is Indole-3-glycerol phosphate synthase, found in Synechococcus sp. (strain CC9902).